We begin with the raw amino-acid sequence, 327 residues long: MSHLAELVANAAAAINQASDVAALDNVRVEYLGKKGHLTLQMTTLRDLPPEERPAAGAVINAAKEQVQQALNARKAELESAALNARLAAETIDISLPGRRIENGGLHPVTRTIDRIESFFGELGFTVATGPEIEDDYHNFDALNIPGHHPARADHDTFWFDATRLLRTQTSGVQIRTMKAQQPPIRIIAPGRVYRNDYDQTHTPMFHQMEGLIVDTNISFTNLKGTLHDFLRNFFEEDLQIRFRPSYFPFTEPSAEVDVMGKNGKWLEVLGCGMVHPNVLRNVGIDPEIYSGFAFGMGMERLTMLRYGVTDLRSFFENDLRFLKQFK.

Position 252 (glutamate 252) interacts with Mg(2+).

The protein belongs to the class-II aminoacyl-tRNA synthetase family. Phe-tRNA synthetase alpha subunit type 1 subfamily. As to quaternary structure, tetramer of two alpha and two beta subunits. Mg(2+) is required as a cofactor.

The protein resides in the cytoplasm. It catalyses the reaction tRNA(Phe) + L-phenylalanine + ATP = L-phenylalanyl-tRNA(Phe) + AMP + diphosphate + H(+). The sequence is that of Phenylalanine--tRNA ligase alpha subunit from Salmonella agona (strain SL483).